We begin with the raw amino-acid sequence, 327 residues long: MSHLAELVANAAAAINQASDVAALDNVRVEYLGKKGHLTLQMMTLRDLPPEERPAAGAVINAAKEQVQQALNARKAELESAALNARLAAETIDISLPGRRIENGGLHPVTRTIDRIESFFGELGFTVATGPEIEDDYHNFDALNIPGHHPARADHDTFWFDATRLLRTQTSGVQIRTMKAQQPPIRIIAPGRVYRNDYDQTHTPMFHQMEGLIVDTNISFTNLKGTLHDFLRNFFEEDLQIRFRPSYFPFTEPSAEVDVMGKNGKWLEVLGCGMVHPNVLRNVGIDPEIYSGFAFGMGMERLTMLRYGVTDLRSFFENDLRFLKQFK.

A Mg(2+)-binding site is contributed by Glu-252.

It belongs to the class-II aminoacyl-tRNA synthetase family. Phe-tRNA synthetase alpha subunit type 1 subfamily. As to quaternary structure, tetramer of two alpha and two beta subunits. Requires Mg(2+) as cofactor.

The protein resides in the cytoplasm. It carries out the reaction tRNA(Phe) + L-phenylalanine + ATP = L-phenylalanyl-tRNA(Phe) + AMP + diphosphate + H(+). The polypeptide is Phenylalanine--tRNA ligase alpha subunit (Salmonella choleraesuis (strain SC-B67)).